Reading from the N-terminus, the 414-residue chain is MHTEAVGGAARRPQKLRSQAAAPACRAMPSEFTSAKLRSDCSRTSLQWYTRTQHKMRRPSLLIKDICKCTLVAFGVWLLYILILNYTAEECDMKRMHYVDPDRIKRAQSYAQEVLQKECRPRYAKTAMALLFEDRYSINLEPFVQKVPTASEAELKYDPPFGFRKFSSKVQSLLDMLPEHDFPEHLRAKACKRCVVVGNGGILHGLELGHALNQFDVVIRLNSAPVEGYSEHVGNKTTIRMTYPEGAPLSDVEYYANDLFVTVLFKSVDFKWLQAMVKNESLPFWVRLFFWKQVAEKVPLQPKHFRILNPVIIKETAFDILQYSEPQSRFWGHDKNIPTIGVIAVVLATHLCDEVSLAGFGYDLSQPRTPLHYFDSQCMGAMHWQVMHNVTTETKFLLKLLKEGVVEDLSGGIH.

Residues 1–65 lie on the Cytoplasmic side of the membrane; the sequence is MHTEAVGGAA…MRRPSLLIKD (65 aa). Residues 66–86 form a helical; Signal-anchor for type II membrane protein membrane-spanning segment; that stretch reads ICKCTLVAFGVWLLYILILNY. Residues 87–414 lie on the Lumenal side of the membrane; it reads TAEECDMKRM…VVEDLSGGIH (328 aa). Residues Cys-194 and Cys-352 are joined by a disulfide bond. Asn-235, Asn-279, and Asn-389 each carry an N-linked (GlcNAc...) asparagine glycan.

The protein belongs to the glycosyltransferase 29 family. In terms of tissue distribution, mainly expressed in brain, and then testis, heart and liver, almost all tissues showed some levels of the gene expression.

The protein resides in the golgi apparatus membrane. It catalyses the reaction a beta-D-Gal-(1-&gt;4)-beta-D-Glc-(1&lt;-&gt;1)-Cer(d18:1(4E)) + CMP-N-acetyl-beta-neuraminate = a ganglioside GM3 (d18:1(4E)) + CMP + H(+). The catalysed reaction is ganglioside GA2 (d18:1(4E)/18:0) + CMP-N-acetyl-beta-neuraminate = ganglioside GM2 (d18:1(4E)/18:0) + CMP + H(+). The enzyme catalyses a beta-D-Gal-(1&lt;-&gt;1')-ceramide + CMP-N-acetyl-beta-neuraminate = N-acetyl-alpha-neuraminosyl-(2-&gt;3)-beta-D-galactosyl-(1&lt;-&gt;1')-ceramide + CMP + H(+). It carries out the reaction ganglioside GA1 (d18:1(4E)/18:0) + CMP-N-acetyl-beta-neuraminate = ganglioside GM1 (d18:1(4E)/18:0) + CMP + H(+). In terms of biological role, (Microbial infection) Gangliosides GD1b and GT1b (derived from GM3) may serve as receptors for some C.botulinum neurotoxins (minimally types BoNT/A, B, C). Functionally, transfers the sialyl group (N-acetyl-alpha-neuraminyl or NeuAc) from CMP-NeuAc to the non-reducing terminal galactose (Gal) of glycosphingolipids forming gangliosides (important molecules involved in the regulation of multiple cellular processes, including cell proliferation and differentiation, apoptosis, embryogenesis, development, and oncogenesis). Mainly involved in the biosynthesis of ganglioside GM3 but can also use different glycolipids as substrate acceptors such as D-galactosylceramide (GalCer), asialo-GM2 (GA2) and asialo-GM1 (GA1), although less preferentially than beta-D-Gal-(1-&gt;4)-beta-D-Glc-(1&lt;-&gt;1)-Cer (LacCer). This is Lactosylceramide alpha-2,3-sialyltransferase (St3gal5) from Mus musculus (Mouse).